The chain runs to 375 residues: MQKLQLCVYIYLFMLIVAGPVDLNENSEQKENVEKEGLCNACTWRQNTKSSRIEAIKIQILSKLRLETAPNISKDAIRQLLPKAPPLRELIDQYDVQRDDSSDGSLEDDDYHATTETIITMPTESDFLMQVDGKPKCCFFKFSSKIQYNKVVKAQLWIYLRPVETPTTVFVQILRLIKPMKDGTRYTGIRSLKLDMNPGTGIWQSIDVKTVLQNWLKQPESNLGIEIKALDENGHDLAVTFPGPGEDGLNPFLEVKVTDTPKRSRRDFGLDCDEHSTESRCCRYPLTVDFEAFGWDWIIAPKRYKANYCSGECEFVFLQKYPHTHLVHQANPRGSAGPCCTPTKMSPINMLYFNGKEQIIYGKIPAMVVDRCGCS.

A signal peptide spans 1 to 23 (MQKLQLCVYIYLFMLIVAGPVDL). A propeptide spanning residues 24–266 (NENSEQKENV…VTDTPKRSRR (243 aa)) is cleaved from the precursor. An N-linked (GlcNAc...) asparagine glycan is attached at asparagine 71. 4 cysteine pairs are disulfide-bonded: cysteine 272–cysteine 282, cysteine 281–cysteine 340, cysteine 309–cysteine 372, and cysteine 313–cysteine 374.

The protein belongs to the TGF-beta family. As to quaternary structure, homodimer; disulfide-linked. Interacts with WFIKKN2, leading to inhibit its activity. Interacts with FSTL3. Post-translationally, synthesized as large precursor molecule that undergoes proteolytic cleavage to generate an N-terminal propeptide and a disulfide linked C-terminal dimer, which is the biologically active molecule. The circulating form consists of a latent complex of the C-terminal dimer and other proteins, including its propeptide, which maintain the C-terminal dimer in a latent, inactive state. Ligand activation requires additional cleavage of the prodomain by a tolloid-like metalloproteinase.

The protein resides in the secreted. In terms of biological role, acts specifically as a negative regulator of skeletal muscle growth. The polypeptide is Growth/differentiation factor 8 (MSTN) (Pan paniscus (Pygmy chimpanzee)).